The primary structure comprises 126 residues: Large ribosomal subunit protein bL12 (126 aa).

This sequence belongs to the bacterial ribosomal protein bL12 family. As to quaternary structure, homodimer. Part of the ribosomal stalk of the 50S ribosomal subunit. Forms a multimeric L10(L12)X complex, where L10 forms an elongated spine to which 2 to 4 L12 dimers bind in a sequential fashion. Binds GTP-bound translation factors.

Forms part of the ribosomal stalk which helps the ribosome interact with GTP-bound translation factors. Is thus essential for accurate translation. In Legionella pneumophila (strain Paris), this protein is Large ribosomal subunit protein bL12.